Consider the following 83-residue polypeptide: Putative protein T-ENOL (83 aa).

A disordered region spans residues 1 to 33 (MASTPMGNEGEKKSSWPSQAAPSLRGGPASLSR).

In Homo sapiens (Human), this protein is Putative protein T-ENOL.